The sequence spans 192 residues: Interferon epsilon (192 aa).

Residues 1 to 21 form the signal peptide; it reads MVHRQLPETVLLLLVSSTIFS. The cysteines at positions 52 and 162 are disulfide-linked.

This sequence belongs to the alpha/beta interferon family. Expressed at very high levels in uterus and, at much lower levels, in ovary and cervix. Very low levels, if any, in other organs. In the endometrium, expressed in the luminal and glandular epithelial cells (at protein level).

The protein resides in the secreted. Functionally, type I interferon required for maintaining basal levels of IFN-regulated genes, including 2'-5'-oligoadenylate synthetase, IRF7 and ISG15, in the female reproductive tract. Directly mediates protection against viral, including HSV-2, and bacterial, including Chlamydia muridarum, genital infections. The sequence is that of Interferon epsilon (Ifne) from Mus musculus (Mouse).